The sequence spans 410 residues: Sensor-like histidine kinase SenX3 (410 aa).

2 helical membrane passes run 6-26 (ALLLAGVLSALALAVGGAVGM) and 46-66 (ITVSQMLQCIVTLMPLGAAVV). Positions 164–380 (NVSHELKTPV…TFTLALPALI (217 aa)) constitute a Histidine kinase domain. Histidine 167 is subject to Phosphohistidine; by autocatalysis. The interval 385–410 (DDERPEQAREPELRSNRSQREEELSR) is disordered.

Autophosphorylated.

It is found in the cell membrane. It catalyses the reaction ATP + protein L-histidine = ADP + protein N-phospho-L-histidine.. Member of the two-component regulatory system SenX3/RegX3. Autophosphorylates, and then transfers the phosphate group to RegX3. This Mycobacterium bovis (strain ATCC BAA-935 / AF2122/97) protein is Sensor-like histidine kinase SenX3.